The sequence spans 420 residues: Pre-mRNA-splicing factor RBM22 (420 aa).

A2 bears the N-acetylalanine mark. A phosphoserine mark is found at S4 and S102. Residues K139 and K149 each participate in a glycyl lysine isopeptide (Lys-Gly) (interchain with G-Cter in SUMO2) cross-link. A C3H1-type zinc finger spans residues 159-186 (RNRPHICSFWVKGECKRGEECPYRHEKP). The residue at position 212 (K212) is an N6-acetyllysine. The region spanning 232–305 (TTLYVGGLGD…RRLNVKWGRS (74 aa)) is the RRM domain. K290 participates in a covalent cross-link: Glycyl lysine isopeptide (Lys-Gly) (interchain with G-Cter in SUMO2). 2 disordered regions span residues 303–343 (GRSQ…AAEE) and 372–420 (APPP…HSSP). Residues 309–318 (RGKEKEKDGT) show a composition bias toward basic and acidic residues.

It belongs to the SLT11 family. Component of the pre-catalytic and catalytic spliceosome complexes. Component of the postcatalytic spliceosome P complex. Interacts with PDCD6; the interaction induces translocation of PDCD6 in the cytoplasm. Interacts with PPIL1.

The protein localises to the nucleus. Its subcellular location is the cytoplasm. Functionally, required for pre-mRNA splicing as component of the activated spliceosome. Involved in the first step of pre-mRNA splicing. Binds directly to the internal stem-loop (ISL) domain of the U6 snRNA and to the pre-mRNA intron near the 5' splice site during the activation and catalytic phases of the spliceosome cycle. Involved in both translocations of the nuclear SLU7 to the cytoplasm and the cytosolic calcium-binding protein PDCD6 to the nucleus upon cellular stress responses. The chain is Pre-mRNA-splicing factor RBM22 (RBM22) from Homo sapiens (Human).